The following is a 173-amino-acid chain: Protein PLASTID REDOX INSENSITIVE 2, chloroplastic (173 aa).

The N-terminal 55 residues, 1-55, are a transit peptide targeting the chloroplast; it reads MATRAWVAAAVALNPQLLPLRSCSPTKSVSPAQRSASMGLRLRSGRPCLGKFVCR.

It localises to the plastid. The protein resides in the chloroplast stroma. Its subcellular location is the chloroplast nucleoid. Functionally, required for the activity of the plastid-encoded RNA polymerase (PEP) and full expression of genes transcribed by PEP. This chain is Protein PLASTID REDOX INSENSITIVE 2, chloroplastic, found in Zea mays (Maize).